The sequence spans 478 residues: uncharacterized protein (478 aa).

The RRM domain occupies 5–85; that stretch reads KRIYVGGLSS…SKLRIEEARP (81 aa). A phosphoserine mark is found at S207 and S308.

Its subcellular location is the nucleus. The protein localises to the nucleolus. This is an uncharacterized protein from Schizosaccharomyces pombe (strain 972 / ATCC 24843) (Fission yeast).